A 493-amino-acid polypeptide reads, in one-letter code: Probable cytosol aminopeptidase (493 aa).

The Mn(2+) site is built by lysine 257 and aspartate 262. The active site involves lysine 269. Residues aspartate 281, aspartate 341, and glutamate 343 each coordinate Mn(2+). Arginine 345 is an active-site residue.

It belongs to the peptidase M17 family. It depends on Mn(2+) as a cofactor.

It localises to the cytoplasm. It carries out the reaction Release of an N-terminal amino acid, Xaa-|-Yaa-, in which Xaa is preferably Leu, but may be other amino acids including Pro although not Arg or Lys, and Yaa may be Pro. Amino acid amides and methyl esters are also readily hydrolyzed, but rates on arylamides are exceedingly low.. The catalysed reaction is Release of an N-terminal amino acid, preferentially leucine, but not glutamic or aspartic acids.. Presumably involved in the processing and regular turnover of intracellular proteins. Catalyzes the removal of unsubstituted N-terminal amino acids from various peptides. This chain is Probable cytosol aminopeptidase, found in Synechococcus sp. (strain WH7803).